Here is a 400-residue protein sequence, read N- to C-terminus: Lysophospholipid transporter LplT (400 aa).

Helical transmembrane passes span 19–39, 53–73, 91–111, 139–159, 164–184, 195–213, 227–247, 257–277, 281–301, 304–324, 352–372, and 373–393; these read VIVA…ATLA, VLQM…GQIA, AGAA…LVGI, LMEA…GVLA, IAAL…NLFI, SWRL…VVLW, LFWG…PVAL, YLNA…AKLV, TVSR…IFSL, ALLP…FFVV, NSAM…GVPA, and VAIG…LWIW.

This sequence belongs to the major facilitator superfamily. LplT (TC 2.A.1.42) family.

It is found in the cell inner membrane. Functionally, catalyzes the facilitated diffusion of 2-acyl-glycero-3-phosphoethanolamine (2-acyl-GPE) into the cell. The sequence is that of Lysophospholipid transporter LplT from Salmonella heidelberg (strain SL476).